We begin with the raw amino-acid sequence, 338 residues long: MLKPLFGKADKTPADVVKNLRDALLVIDRHGTNTSERKVEKAIEETAKMLALAKTFIYGSDANEPNNEQVTQLAQEVYNANVLPMLIKHLHKFEFECKKDVASVFNNLLRRQIGTRSPTVEYLAARPEILITLLLGYEQPDIALTCGSMLREAVRHEHLARIVLYSEYFQRFFVFVQSDVFDIATDAFSTFKDLMTKHKNMCAEYLDNNYDRFFGQYSALTNSENYVTRRQSLKLLGELLLDRHNFSTMNKYITSPENLKTVMELLRDKRRNIQYEAFHVFKIFVANPNKPRPITDILTRNRDKLVEFLTAFHNDRTNDEQFNDEKAYLIKQIQELRV.

This sequence belongs to the Mo25 family.

Its subcellular location is the cytoplasm. The protein resides in the cytoskeleton. The protein localises to the spindle pole. Regulates asymmetric cell division in Q.p neuroblast lineage. Plays a role in cell shedding during embryogenesis. The protein is MO25-like protein 2 (mop-25.2) of Caenorhabditis elegans.